A 206-amino-acid chain; its full sequence is Protein phosphatase inhibitor 2 (206 aa).

Positions 1–36 are disordered; sequence MAASTASHRPIKGILKNKTSAASPPVVPSAEQPRPI. Ala-2 carries the N-acetylalanine modification. The interval 12–17 is required for binding PPP1CC; that stretch reads KGILKN. The required for binding the 'RVXF' binding groove of PPP1CC stretch occupies residues 44–56; sequence KSQKWDEMNILAT. The residue at position 45 (Ser-45) is a Phosphoserine; by ATM. Residue Thr-74 is modified to Phosphothreonine. The disordered stretch occupies residues 75–143; that stretch reads PYHNMIGDDE…EREKKRQFEM (69 aa). Positions 81-92 are enriched in acidic residues; that stretch reads GDDEDAYSDSEG. Phosphoserine occurs at positions 88 and 90. Thr-97 and Thr-117 each carry phosphothreonine. The segment covering 111–121 has biased composition (basic and acidic residues); that stretch reads SEPKYRTREQE. A phosphoserine mark is found at Ser-122, Ser-123, and Ser-131. The span at 122-131 shows a compositional bias: acidic residues; that stretch reads SSGEEDNDLS. Residues 132–143 are compositionally biased toward basic and acidic residues; sequence PEEREKKRQFEM. The tract at residues 148–151 is required for binding PPP1CC catalytic center, displacing metal ions and inhibition of PPP1CC catalytic activity; sequence HYNE. The disordered stretch occupies residues 164–206; that stretch reads KDLHDDDEDEEMAETADGDSMNVEESSQGSTTSDHLQHKSQSS. Residues 168–180 show a composition bias toward acidic residues; it reads DDDEDEEMAETAD. The segment covering 186-206 has biased composition (polar residues); the sequence is VEESSQGSTTSDHLQHKSQSS.

This sequence belongs to the protein phosphatase inhibitor 2 family. As to quaternary structure, heterodimer with PP1. Phosphorylation on Ser-45 by ATM activates PP1 by dissociating the PP1-PPP1R2 complex. Phosphorylation on Thr-74 by GSK3 activates PP1 by dissociating the PP1-PPP1R2 complex.

Inhibitor of protein-phosphatase 1. This chain is Protein phosphatase inhibitor 2 (Ppp1r2), found in Mus musculus (Mouse).